A 606-amino-acid chain; its full sequence is Transmembrane 9 superfamily member 1 (606 aa).

The N-terminal stretch at 1-27 is a signal peptide; the sequence is MTVVGNPRSWSCRWLPILILLLGTGHG. Asn178 carries N-linked (GlcNAc...) asparagine glycosylation. 4 consecutive transmembrane segments (helical) span residues 237 to 257, 310 to 330, 339 to 359, and 373 to 393; these read LSII…AVIL, VLGV…MALL, GAIN…SGYV, and VWNI…TWSV. Asn401 is a glycosylation site (N-linked (GlcNAc...) asparagine). 4 helical membrane-spanning segments follow: residues 412 to 432, 469 to 489, 499 to 519, and 535 to 555; these read ILLL…IGGI, VGGF…FATV, GILF…SIAL, and SVLS…FYYA. N-linked (GlcNAc...) asparagine glycosylation is present at Asn559. Residues 570–590 traverse the membrane as a helical segment; it reads FGYSLLTGYVFFLMLGTISFF.

It belongs to the nonaspanin (TM9SF) (TC 9.A.2) family.

It is found in the lysosome membrane. It localises to the cytoplasmic vesicle. The protein resides in the autophagosome membrane. Plays an essential role in autophagy. The chain is Transmembrane 9 superfamily member 1 (TM9SF1) from Pongo abelii (Sumatran orangutan).